Reading from the N-terminus, the 310-residue chain is Ribose-phosphate pyrophosphokinase (310 aa).

ATP-binding positions include 34-36 (DQE) and 93-94 (RQ). 2 residues coordinate Mg(2+): H127 and D167. The active site involves K190. D-ribose 5-phosphate-binding positions include R192, D216, and 220 to 224 (DSGGT).

The protein belongs to the ribose-phosphate pyrophosphokinase family. Class I subfamily. Homohexamer. It depends on Mg(2+) as a cofactor.

The protein resides in the cytoplasm. It carries out the reaction D-ribose 5-phosphate + ATP = 5-phospho-alpha-D-ribose 1-diphosphate + AMP + H(+). It functions in the pathway metabolic intermediate biosynthesis; 5-phospho-alpha-D-ribose 1-diphosphate biosynthesis; 5-phospho-alpha-D-ribose 1-diphosphate from D-ribose 5-phosphate (route I): step 1/1. Functionally, involved in the biosynthesis of the central metabolite phospho-alpha-D-ribosyl-1-pyrophosphate (PRPP) via the transfer of pyrophosphoryl group from ATP to 1-hydroxyl of ribose-5-phosphate (Rib-5-P). The polypeptide is Ribose-phosphate pyrophosphokinase (Brucella melitensis biotype 1 (strain ATCC 23456 / CCUG 17765 / NCTC 10094 / 16M)).